The chain runs to 543 residues: Ribonuclease Y (543 aa).

Residues 4–24 form a helical membrane-spanning segment; that stretch reads IIMIPVATAIVSLLVGTVIGY. In terms of domain architecture, KH spans 233 to 296; sequence TVSVVDLPNE…EIAKRAMERL (64 aa). An HD domain is found at 359–452; it reads VLSHSIEVGK…VVAADTISSA (94 aa).

Belongs to the RNase Y family.

It localises to the cell membrane. Endoribonuclease that initiates mRNA decay. This Lactobacillus helveticus (strain DPC 4571) protein is Ribonuclease Y.